A 618-amino-acid chain; its full sequence is Probable N-acetylgalactosaminyltransferase 6 (618 aa).

The Cytoplasmic segment spans residues 1 to 16 (MIASLIRSRRRSRRCV). Residues 17-39 (VYSVFLFGFLALWGSFALALVFL) form a helical; Signal-anchor for type II membrane protein membrane-spanning segment. Residues 40-618 (SDMYIGEDQI…TEMSWLPEHP (579 aa)) lie on the Lumenal side of the membrane. N-linked (GlcNAc...) asparagine glycosylation is found at Asn-81 and Asn-149. 2 disulfides stabilise this stretch: Cys-147–Cys-381 and Cys-372–Cys-452. Positions 156–267 (LPTTSVIIVY…KGWLEPLLTR (112 aa)) are catalytic subdomain A. Asp-197 and Arg-228 together coordinate substrate. Asp-251 contributes to the Mn(2+) binding site. Position 252 (Ser-252) interacts with substrate. His-253 serves as a coordination point for Mn(2+). The segment at 327 to 389 (PIESPTMAGG…PCSHVGHVFR (63 aa)) is catalytic subdomain B. Trp-358 is a binding site for substrate. Residue His-386 participates in Mn(2+) binding. Arg-389 contacts substrate. The Ricin B-type lectin domain occupies 474-609 (RFGRMTSSSN…SNDRQNWTIT (136 aa)). Asn-483 is a glycosylation site (N-linked (GlcNAc...) asparagine). 3 disulfides stabilise this stretch: Cys-487/Cys-505, Cys-530/Cys-550, and Cys-575/Cys-597. Asn-605 carries N-linked (GlcNAc...) asparagine glycosylation.

The protein belongs to the glycosyltransferase 2 family. GalNAc-T subfamily. It depends on Mn(2+) as a cofactor.

It is found in the golgi apparatus membrane. The protein operates within protein modification; protein glycosylation. Probable glycopeptide transferase involved in O-linked oligosaccharide biosynthesis. Glycopeptide transferases catalyze the transfer of an N-acetyl-D-galactosamine residue to an already glycosylated peptide. In contrast to other members of the family, it does not act as a peptide transferase that transfers GalNAc onto serine or threonine residue on peptides that have been tested. Some peptide transferase activity is however not excluded, considering that its appropriate peptide substrate may remain unidentified. This chain is Probable N-acetylgalactosaminyltransferase 6 (gly-6), found in Caenorhabditis elegans.